A 208-amino-acid polypeptide reads, in one-letter code: Thiamine-phosphate synthase (208 aa).

4-amino-2-methyl-5-(diphosphooxymethyl)pyrimidine contacts are provided by residues 36–40 and Asp68; that span reads QLRMK. Residues Asp69 and Asp88 each contribute to the Mg(2+) site. A 4-amino-2-methyl-5-(diphosphooxymethyl)pyrimidine-binding site is contributed by Thr107. Residue 133-135 participates in 2-[(2R,5Z)-2-carboxy-4-methylthiazol-5(2H)-ylidene]ethyl phosphate binding; it reads TTT. Position 136 (Lys136) interacts with 4-amino-2-methyl-5-(diphosphooxymethyl)pyrimidine. Gly169 serves as a coordination point for 2-[(2R,5Z)-2-carboxy-4-methylthiazol-5(2H)-ylidene]ethyl phosphate.

Belongs to the thiamine-phosphate synthase family. The cofactor is Mg(2+).

It carries out the reaction 2-[(2R,5Z)-2-carboxy-4-methylthiazol-5(2H)-ylidene]ethyl phosphate + 4-amino-2-methyl-5-(diphosphooxymethyl)pyrimidine + 2 H(+) = thiamine phosphate + CO2 + diphosphate. It catalyses the reaction 2-(2-carboxy-4-methylthiazol-5-yl)ethyl phosphate + 4-amino-2-methyl-5-(diphosphooxymethyl)pyrimidine + 2 H(+) = thiamine phosphate + CO2 + diphosphate. The enzyme catalyses 4-methyl-5-(2-phosphooxyethyl)-thiazole + 4-amino-2-methyl-5-(diphosphooxymethyl)pyrimidine + H(+) = thiamine phosphate + diphosphate. The protein operates within cofactor biosynthesis; thiamine diphosphate biosynthesis; thiamine phosphate from 4-amino-2-methyl-5-diphosphomethylpyrimidine and 4-methyl-5-(2-phosphoethyl)-thiazole: step 1/1. Condenses 4-methyl-5-(beta-hydroxyethyl)thiazole monophosphate (THZ-P) and 2-methyl-4-amino-5-hydroxymethyl pyrimidine pyrophosphate (HMP-PP) to form thiamine monophosphate (TMP). The sequence is that of Thiamine-phosphate synthase from Phocaeicola vulgatus (strain ATCC 8482 / DSM 1447 / JCM 5826 / CCUG 4940 / NBRC 14291 / NCTC 11154) (Bacteroides vulgatus).